The following is a 212-amino-acid chain: Pyridoxine/pyridoxamine 5'-phosphate oxidase (212 aa).

Substrate is bound by residues 8 to 11 (RREY) and Lys66. FMN contacts are provided by residues 61–66 (RIVLLK), 76–77 (FT), Arg82, Lys83, and Gln105. Residues Tyr123, Arg127, and Ser131 each contribute to the substrate site. Residues 140-141 (QS) and Trp185 contribute to the FMN site. 191–193 (RLH) serves as a coordination point for substrate. Arg195 serves as a coordination point for FMN.

The protein belongs to the pyridoxamine 5'-phosphate oxidase family. In terms of assembly, homodimer. FMN is required as a cofactor.

It carries out the reaction pyridoxamine 5'-phosphate + O2 + H2O = pyridoxal 5'-phosphate + H2O2 + NH4(+). The enzyme catalyses pyridoxine 5'-phosphate + O2 = pyridoxal 5'-phosphate + H2O2. It participates in cofactor metabolism; pyridoxal 5'-phosphate salvage; pyridoxal 5'-phosphate from pyridoxamine 5'-phosphate: step 1/1. The protein operates within cofactor metabolism; pyridoxal 5'-phosphate salvage; pyridoxal 5'-phosphate from pyridoxine 5'-phosphate: step 1/1. Functionally, catalyzes the oxidation of either pyridoxine 5'-phosphate (PNP) or pyridoxamine 5'-phosphate (PMP) into pyridoxal 5'-phosphate (PLP). The chain is Pyridoxine/pyridoxamine 5'-phosphate oxidase from Shewanella frigidimarina (strain NCIMB 400).